The primary structure comprises 132 residues: Histone H2B.9 (132 aa).

Residues 1–11 are compositionally biased toward basic and acidic residues; that stretch reads MAPKAEKKPAE. The tract at residues 1–41 is disordered; the sequence is MAPKAEKKPAEKAPAPKAEKKIAKEGGTSEIVKKKKKTKKS. A2 carries the n,N,N-trimethylalanine; alternate modification. A2 carries the post-translational modification N,N-dimethylalanine; alternate. The residue at position 2 (A2) is an N-methylalanine; alternate. K4 carries the post-translational modification N6-methyllysine. K7, K12, K20, and K21 each carry N6-acetyllysine. A Glycyl lysine isopeptide (Lys-Gly) (interchain with G-Cter in ubiquitin) cross-link involves residue K128.

This sequence belongs to the histone H2B family. As to quaternary structure, the nucleosome is a histone octamer containing two molecules each of H2A, H2B, H3 and H4 assembled in one H3-H4 heterotetramer and two H2A-H2B heterodimers. The octamer wraps approximately 147 bp of DNA. Post-translationally, can be acetylated to form H2BK6ac, H2BK33ac and H2BK34ac. Monoubiquitinated by BRE1 to form H2BK143ub1 and deubiquitinated by UBP26. Required for heterochromatic histone H3 di- and trimethylation at H3K4me. May give a specific tag for epigenetic transcriptional activation.

The protein localises to the nucleus. The protein resides in the chromosome. Its function is as follows. Core component of nucleosome. Nucleosomes wrap and compact DNA into chromatin, limiting DNA accessibility to the cellular machineries which require DNA as a template. Histones thereby play a central role in transcription regulation, DNA repair, DNA replication and chromosomal stability. DNA accessibility is regulated via a complex set of post-translational modifications of histones, also called histone code, and nucleosome remodeling. In Arabidopsis thaliana (Mouse-ear cress), this protein is Histone H2B.9.